Reading from the N-terminus, the 544-residue chain is Pyruvate kinase (544 aa).

Arg31 is a substrate binding site. Residues Asn33 and Asp61 each contribute to the K(+) site. ATP is bound at residue Asn33 to His36. An ATP-binding site is contributed by Arg68. Glu204 contributes to the Mg(2+) binding site. Gly227, Asp228, and Thr260 together coordinate substrate. Asp228 provides a ligand contact to Mg(2+).

This sequence belongs to the pyruvate kinase family. As to quaternary structure, homotetramer. The cofactor is Mg(2+). K(+) serves as cofactor.

The enzyme catalyses pyruvate + ATP = phosphoenolpyruvate + ADP + H(+). The protein operates within carbohydrate degradation; glycolysis; pyruvate from D-glyceraldehyde 3-phosphate: step 5/5. This is Pyruvate kinase from Thermoplasma acidophilum (strain ATCC 25905 / DSM 1728 / JCM 9062 / NBRC 15155 / AMRC-C165).